Consider the following 948-residue polypeptide: MSLPSALLPTAELHYQSLISEHPHIANWPSSVLNQLRYVLGLSQFVAQTLQRDDPLCQVLPSLLAKPSREQYYRSELAQWLAECQDEAVAQKRLRQFRNQEMVYIAWRDFCASWTLEESLSHLSQLAEALIFESYQWLYQRCCLEMGTPCNAQGEAQPMLIIGMGKLGGGELNFSSDIDLIFTYPENGETQGARRSIANAQFFTRLGQRLIKLLDQSTPDGFCYRVDMRLRPFGDSGPLAMSYAALEDYYQEQGRDWERYAMIKARVMGREMYPQYQELRQMLRPFVFRRYIDFSAIQSLRRMKSMISSEVRRRGLSNNIKLGAGGIREVEFIAQVFQLIRGGREPSLRKRGLLETLDAIAELELLTREQVQDLRDAYRFLRRLENLLQAMADKQTQTLPDKEDDQLRLSIAIGLADWPSLQREVSEHMQRVHRVFATLIGEEDEEEEHTVARHFHELWDMAHKPEVIEHIIEQDLGLSDAGEQIRTITQFKDDLAKRTIGPRGREVLNRLMPKVYQAVFAHPDAEFGLSRVLALLHSIATRTTYLELLDEHPAALVQLVRLCTASPMISEQLARYPILLDELIDPQHLYNPIPLESYQTELRDFLARIPEEDMEQQMEGLRQFKQISILRIAAADIAGVLPVMKVSDHLTYLAEAIVEAVVSQAWLQVSSKYGEPTHLKHRDGRGFAVVGYGKVGGWELGYNSDLDIVFMHDCPVEVNTDGEKSIDGRQFYLRLAQRIIHIFSTRTASGILYEVDTRLRPSGASGLLVSPTDAFDEYQRQEAWTWEHQALVRARMIYGDAPLQQAFANTRHQILCLPREEHKLKQEVVEMRIKMRDHLGGKKAGRFMLKQDEGGITDIEFLAQYLVLRFSHQQPKLTRWSDNVRIFESLMNHQVMSESQALALTHAYTSMRDQIHRRNLLNQSADVRDSQFVVEREQVIQAWQQWLG.

The tract at residues 1–444 (MSLPSALLPT…VFATLIGEED (444 aa)) is adenylyl removase. Residues 452 to 948 (ARHFHELWDM…VIQAWQQWLG (497 aa)) form an adenylyl transferase region.

Belongs to the GlnE family. Mg(2+) is required as a cofactor.

It catalyses the reaction [glutamine synthetase]-O(4)-(5'-adenylyl)-L-tyrosine + phosphate = [glutamine synthetase]-L-tyrosine + ADP. It carries out the reaction [glutamine synthetase]-L-tyrosine + ATP = [glutamine synthetase]-O(4)-(5'-adenylyl)-L-tyrosine + diphosphate. In terms of biological role, involved in the regulation of glutamine synthetase GlnA, a key enzyme in the process to assimilate ammonia. When cellular nitrogen levels are high, the C-terminal adenylyl transferase (AT) inactivates GlnA by covalent transfer of an adenylyl group from ATP to specific tyrosine residue of GlnA, thus reducing its activity. Conversely, when nitrogen levels are low, the N-terminal adenylyl removase (AR) activates GlnA by removing the adenylyl group by phosphorolysis, increasing its activity. The regulatory region of GlnE binds the signal transduction protein PII (GlnB) which indicates the nitrogen status of the cell. This is Bifunctional glutamine synthetase adenylyltransferase/adenylyl-removing enzyme from Vibrio cholerae serotype O1 (strain ATCC 39315 / El Tor Inaba N16961).